The following is a 154-amino-acid chain: MTFHFLLLLSRQGKTRLTKWYSPFTNKEKSRFTREIGNMVLNRPPKLCNFLEWKEYKIIFKRYASLYFVVCCDREDNELIVLEIIHHFVEILDRYFGNVCELDLIFNFHKAYYILDELIMAGELQETSKKTVLRLISQQDTLLEGGPGEHKVDL.

This sequence belongs to the adaptor complexes small subunit family. Adaptor protein complex 1 (AP-1) is a heterotetramer composed of two large adaptins (gamma-type subunit and beta-type subunit), a medium adaptin (mu-type subunit) and a small adaptin (sigma-type subunit).

The protein resides in the golgi apparatus. It is found in the trans-Golgi network. Its subcellular location is the cytoplasmic vesicle. The protein localises to the clathrin-coated vesicle membrane. In terms of biological role, subunit of clathrin-associated adaptor protein complex 1 that plays a role in protein sorting in the trans-Golgi network (TGN) and endosomes. The AP complexes mediate the recruitment of clathrin to membranes and the recognition of sorting signals within the cytosolic tails of transmembrane cargo molecules. Also involved in early steps of phagocytosis and macropinocytosis. The polypeptide is AP-1 complex subunit sigma-2 (ap1s2) (Dictyostelium discoideum (Social amoeba)).